The primary structure comprises 464 residues: Tyrosine aminotransferase (464 aa).

At Lys-284 the chain carries N6-(pyridoxal phosphate)lysine.

This sequence belongs to the class-I pyridoxal-phosphate-dependent aminotransferase family. In terms of assembly, homodimer. The cofactor is pyridoxal 5'-phosphate. Expressed in the muscle. Expressed in the hypodermis and intestine.

The catalysed reaction is L-tyrosine + 2-oxoglutarate = 3-(4-hydroxyphenyl)pyruvate + L-glutamate. The enzyme catalyses 3-hydroxy-L-phenylalanine + 2-oxoglutarate = 3-(3-hydroxyphenyl)pyruvate + L-glutamate. It participates in amino-acid degradation; L-phenylalanine degradation; acetoacetate and fumarate from L-phenylalanine: step 2/6. In terms of biological role, transaminase involved in tyrosine breakdown. Converts tyrosine to p-hydroxyphenylpyruvate. Has no transaminase activity towards phenylalanine. Plays protective role against oxidative stress, metabolizing meta-tyrosine and negatively regulating its accumulation. Plays a role in modulating the daf-2/insulin receptor-like transduction pathway through regulating tyrosine levels. Negatively regulates dauer formation. Plays a role in longevity. The protein is Tyrosine aminotransferase of Caenorhabditis elegans.